We begin with the raw amino-acid sequence, 1128 residues long: Major DNA-binding protein (1128 aa).

A required for nuclear localization region spans residues 1104–1128 (LGGGGQGSGGRRKRRLATVLPGLEV).

Belongs to the herpesviridae major DNA-binding protein family. In terms of assembly, homooligomers. Forms double-helical filaments necessary for the formation of replication compartments within the host nucleus. Interacts with the origin-binding protein. Interacts with the helicase primase complex; this interaction stimulates primer synthesis activity of the helicase-primase complex. Interacts with the DNA polymerase. Interacts with the alkaline exonuclease; this interaction increases its nuclease processivity.

The protein resides in the virion tegument. Its subcellular location is the host nucleus. In terms of biological role, plays several crucial roles in viral infection. Participates in the opening of the viral DNA origin to initiate replication by interacting with the origin-binding protein. May disrupt loops, hairpins and other secondary structures present on ssDNA to reduce and eliminate pausing of viral DNA polymerase at specific sites during elongation. Promotes viral DNA recombination by performing strand-transfer, characterized by the ability to transfer a DNA strand from a linear duplex to a complementary single-stranded DNA circle. Can also catalyze the renaturation of complementary single strands. Additionally, reorganizes the host cell nucleus, leading to the formation of prereplicative sites and replication compartments. This process is driven by the protein which can form double-helical filaments in the absence of DNA. In Homo sapiens (Human), this protein is Major DNA-binding protein.